Reading from the N-terminus, the 354-residue chain is Lysine racemase (354 aa).

The residue at position 36 (Lys-36) is an N6-(pyridoxal phosphate)lysine.

It belongs to the alanine racemase family. As to quaternary structure, homodimer. It depends on pyridoxal 5'-phosphate as a cofactor.

The catalysed reaction is L-lysine = D-lysine. The enzyme catalyses L-ornithine = D-ornithine. Its pathway is cell wall biogenesis; peptidoglycan biosynthesis. Catalyzes the interconversion of D-lysine and L-lysine. Has also high activity toward ornithine, and weaker activity toward alanine. Contributes to production of D-lysine and D-alanine for use as peptidoglycan components. This chain is Lysine racemase, found in Thermotoga maritima (strain ATCC 43589 / DSM 3109 / JCM 10099 / NBRC 100826 / MSB8).